Consider the following 310-residue polypeptide: tRNA dimethylallyltransferase (310 aa).

ATP is bound at residue 5–12 (GPTASGKS). 7-12 (TASGKS) lines the substrate pocket. Positions 30 to 33 (DSMQ) are interaction with substrate tRNA.

This sequence belongs to the IPP transferase family. As to quaternary structure, monomer. Mg(2+) is required as a cofactor.

The enzyme catalyses adenosine(37) in tRNA + dimethylallyl diphosphate = N(6)-dimethylallyladenosine(37) in tRNA + diphosphate. In terms of biological role, catalyzes the transfer of a dimethylallyl group onto the adenine at position 37 in tRNAs that read codons beginning with uridine, leading to the formation of N6-(dimethylallyl)adenosine (i(6)A). The protein is tRNA dimethylallyltransferase of Rhodopseudomonas palustris (strain HaA2).